A 171-amino-acid polypeptide reads, in one-letter code: Glucagon family neuropeptides (171 aa).

A signal peptide spans 1-22; the sequence is MYRKALLVWLLVYGIMRCTVHS. Residues 23–76 constitute a propeptide that is removed on maturation; that stretch reads SPTALKYPALRLEDEVYDEDGNTLPDFAFDNNPIGIGNPASVFDDMYSFYYPAE. Positions 145–153 are important for receptor binding; it reads VKKYLAAVL. At Lys164 the chain carries Lysine amide. Positions 168 to 171 are excised as a propeptide; sequence VAYL.

Belongs to the glucagon family.

It is found in the secreted. Its function is as follows. Primary role of GRF is to release GH from the pituitary. In terms of biological role, PACAP is a neuropeptide involved in diverse array of physiological processes through activating the PACAP subfamily of class B1 G protein-coupled receptors: VIP receptor 1 (VIPR1), VIP receptor 2 (VIPR2), and PACAP type I receptor (ADCYAP1R1). Exerts neuroprotective and general cytoprotective effects due to anti-apoptotic, anti-inflammatory, and antioxidant actions. The sequence is that of Glucagon family neuropeptides (adcyap1) from Pelophylax ridibundus (Marsh frog).